A 66-amino-acid chain; its full sequence is Large ribosomal subunit protein bL31 (66 aa).

Zn(2+) is bound by residues Cys16, Cys18, Cys36, and Cys39.

Belongs to the bacterial ribosomal protein bL31 family. Type A subfamily. As to quaternary structure, part of the 50S ribosomal subunit. Zn(2+) is required as a cofactor.

In terms of biological role, binds the 23S rRNA. The chain is Large ribosomal subunit protein bL31 from Geobacillus sp. (strain WCH70).